A 707-amino-acid chain; its full sequence is Acyl-CoA ligase 891, peroxisomal (707 aa).

259–270 is a binding site for ATP; the sequence is INYTSGTTGPPK. The fatty acid-binding stretch occupies residues 525 to 549; the sequence is DGWFRTGDVCTVDAQGRFIIIDRRK. Positions 705–707 match the Peroxisome targeting signal motif; the sequence is AKL.

It belongs to the ATP-dependent AMP-binding enzyme family.

It is found in the peroxisome matrix. It carries out the reaction (4E,8E)-10-(4-hydroxy-6-methoxy-7-methyl-3-oxo-1,3-dihydro-2-benzofuran-5-yl)-4,8-dimethyldeca-4,8-dienoate + ATP + CoA = (4E,8E)-10-(4-hydroxy-6-methoxy-7-methyl-3-oxo-1,3-dihydro-2-benzofuran-5-yl)-4,8-dimethyldeca-4,8-dienoyl-CoA + AMP + diphosphate. It functions in the pathway secondary metabolite biosynthesis; terpenoid biosynthesis. In terms of biological role, acyl-CoA ligase involved in the biosynthesis of mycophenolic acid (MPA), the first isolated antibiotic natural product in the world obtained from a culture of Penicillium brevicompactum in 1893. The peroxisomal acyl-CoA ligase 891 converts the intermediate MFDHMP-3C into MFDHMP-3C-CoA which impairs its diffusion from the peroxisome. The first step of the pathway is the synthesis of 5-methylorsellinic acid (5MOA) by the cytosolic polyketide synthase mpaC. 5MOA is then converted to the phthalide compound 5,7-dihydroxy-4,6-dimethylphthalide (DHMP) by the endoplasmic reticulum-bound cytochrome P450 monooxygenase mpaDE. MpaDE first catalyzes hydroxylation of 5-MOA to 4,6-dihydroxy-2-(hydroxymethyl)-3-methylbenzoic acid (DHMB). MpaDE then acts as a lactone synthase that catalyzes the ring closure to convert DHMB into DHMP. The next step is the prenylation of DHMP by the Golgi apparatus-associated prenyltransferase mpaA to yield farnesyl-DHMP (FDHMP). The ER-bound oxygenase mpaB then mediates the oxidative cleavage the C19-C20 double bond in FDHMP to yield FDHMP-3C via a mycophenolic aldehyde intermediate. The O-methyltransferase mpaG catalyzes the methylation of FDHMP-3C to yield MFDHMP-3C. After the cytosolic methylation of FDHMP-3C, MFDHMP-3C enters into peroxisomes probably via free diffusion due to its low molecular weight. Upon a peroxisomal CoA ligation reaction, catalyzed by a beta-oxidation component enzyme acyl-CoA ligase ACL891, MFDHMP-3C-CoA would then be restricted to peroxisomes for the following beta-oxidation pathway steps. The peroxisomal beta-oxidation machinery than converts MFDHMP-3C-CoA into MPA_CoA, via a beta-oxidation chain-shortening process. Finally mpaH acts as a peroxisomal acyl-CoA hydrolase with high substrate specificity toward MPA-CoA to release the final product MPA. This chain is Acyl-CoA ligase 891, peroxisomal, found in Penicillium brevicompactum.